The sequence spans 310 residues: Ribosomal RNA small subunit methyltransferase H (310 aa).

S-adenosyl-L-methionine-binding positions include 32–34 (GGH), Asp-52, Phe-79, Asp-100, and Gln-107.

This sequence belongs to the methyltransferase superfamily. RsmH family.

It is found in the cytoplasm. The enzyme catalyses cytidine(1402) in 16S rRNA + S-adenosyl-L-methionine = N(4)-methylcytidine(1402) in 16S rRNA + S-adenosyl-L-homocysteine + H(+). In terms of biological role, specifically methylates the N4 position of cytidine in position 1402 (C1402) of 16S rRNA. The sequence is that of Ribosomal RNA small subunit methyltransferase H from Bacillus cereus (strain G9842).